A 216-amino-acid polypeptide reads, in one-letter code: MKAVRLAVIDYDAGNLHSACKGLERAGAEVQLVTEPAGLAAFDGLVLPGDGAFDPAMQQLRARGFGEAIRQAIERQQPFLGICIGLQVLFEDSEEGTEPGLGIVPGRVQRFRPEPGLRIPHMGWNQLHLTQPDSPLWAGIPEQSWVYFVHSYHAVPKDPSWVVATTQHGSQTCVAAIARGTLFATQFHPEKSGPVGLKILQNFVEFVARRLPAAGA.

A Glutamine amidotransferase type-1 domain is found at 5 to 213 (RLAVIDYDAG…VEFVARRLPA (209 aa)). Cys-83 acts as the Nucleophile in catalysis. Residues His-188 and Glu-190 contribute to the active site.

As to quaternary structure, heterodimer of HisH and HisF.

It is found in the cytoplasm. The enzyme catalyses 5-[(5-phospho-1-deoxy-D-ribulos-1-ylimino)methylamino]-1-(5-phospho-beta-D-ribosyl)imidazole-4-carboxamide + L-glutamine = D-erythro-1-(imidazol-4-yl)glycerol 3-phosphate + 5-amino-1-(5-phospho-beta-D-ribosyl)imidazole-4-carboxamide + L-glutamate + H(+). It carries out the reaction L-glutamine + H2O = L-glutamate + NH4(+). The protein operates within amino-acid biosynthesis; L-histidine biosynthesis; L-histidine from 5-phospho-alpha-D-ribose 1-diphosphate: step 5/9. Functionally, IGPS catalyzes the conversion of PRFAR and glutamine to IGP, AICAR and glutamate. The HisH subunit catalyzes the hydrolysis of glutamine to glutamate and ammonia as part of the synthesis of IGP and AICAR. The resulting ammonia molecule is channeled to the active site of HisF. This Synechococcus sp. (strain JA-3-3Ab) (Cyanobacteria bacterium Yellowstone A-Prime) protein is Imidazole glycerol phosphate synthase subunit HisH.